A 713-amino-acid chain; its full sequence is Polyribonucleotide nucleotidyltransferase (713 aa).

2 residues coordinate Mg(2+): aspartate 487 and aspartate 493. A KH domain is found at 554 to 613 (PRIEVMNIPVDKIREVIGSGGKVIREIVEKTGAKINIEDDGTVKIASASGKEIEAARKWI). Residues 623 to 691 (GQIYEGTVVK…ERGKVRLSMK (69 aa)) enclose the S1 motif domain.

The protein belongs to the polyribonucleotide nucleotidyltransferase family. Requires Mg(2+) as cofactor.

It is found in the cytoplasm. The enzyme catalyses RNA(n+1) + phosphate = RNA(n) + a ribonucleoside 5'-diphosphate. Its function is as follows. Involved in mRNA degradation. Catalyzes the phosphorolysis of single-stranded polyribonucleotides processively in the 3'- to 5'-direction. The protein is Polyribonucleotide nucleotidyltransferase of Agrobacterium fabrum (strain C58 / ATCC 33970) (Agrobacterium tumefaciens (strain C58)).